The sequence spans 414 residues: Lysosome-associated membrane glycoprotein 1 (414 aa).

A signal peptide spans 1–18; sequence MGGAARAVLLGFLQASSS. The segment at 19–181 is first lumenal domain; that stretch reads FDVRDSTGKV…SANKTECRED (163 aa). Residues 19–379 are Lumenal-facing; the sequence is FDVRDSTGKV…EECQLDENNM (361 aa). Cysteines 29 and 67 form a disulfide. 10 N-linked (GlcNAc...) asparagine glycosylation sites follow: N33, N58, N71, N90, N108, N117, N154, N159, N168, and N174. A disulfide bridge links C142 with C178. Positions 182 to 224 are hinge; sequence MVSTTTVAPTTPKHATSQVPTTSPAPTAAPSSPAVGKYNVTGA. The tract at residues 186–213 is disordered; that stretch reads TTVAPTTPKHATSQVPTTSPAPTAAPSS. Residues 196 to 213 show a composition bias toward low complexity; the sequence is ATSQVPTTSPAPTAAPSS. 7 N-linked (GlcNAc...) asparagine glycosylation sites follow: N220, N225, N238, N259, N289, N301, and N319. A second lumenal domain region spans residues 225-379; it reads NGTCVLASMG…EECQLDENNM (155 aa). A disulfide bond links C228 and C266. C335 and C372 form a disulfide bridge. The chain crosses the membrane as a helical span at residues 380–403; it reads LIPIIVGAALAGLVLIVLIAYLIG. At 404–414 the chain is on the cytoplasmic side; the sequence is RKRSHAGYQTI.

This sequence belongs to the LAMP family.

The protein resides in the lysosome membrane. It is found in the endosome membrane. The protein localises to the late endosome membrane. It localises to the cell membrane. Its subcellular location is the cytolytic granule membrane. Lysosomal membrane glycoprotein which plays an important role in lysosome biogenesis, lysosomal pH regulation, autophagy and cholesterol homeostasis. In terms of biological role, (Microbial infection) Plays an essential role in efficient replication and spread of Marek's disease virus, by facilitating viral cell-to-cell spread. The sequence is that of Lysosome-associated membrane glycoprotein 1 (LAMP1) from Gallus gallus (Chicken).